Here is a 354-residue protein sequence, read N- to C-terminus: MAGCCLSAEEKESQRINAEIEKQLRRDKRDARRELKLLLLGTGESGKSTFIKQMRIIHGSGYTDEDRKGFTKLVYQNIFTSMQSMIRAMDTLRIQYTSEQNMENALVIREVEVDKVSSLERKHVEAIKKLWEDEGIQECYDRRREYQLSDSTKYYLSDIDRISNPGFIPTQQDVLRVRVPTTGIIEYPFDLENIIFRMVDVGGQRSERRKWIHCFENVTSIIFLVALSEYDQVLAECDNENRMEESKALFKTIITYPWFQNSSVILFLNKKDLLQEKIMYSHLIDYFPEFTGPKQDSQAARDFILKLYQDQNPDKEKVIYSHFTCATDTENIRFVFAAVKDTILQLNLREFNLV.

A G-alpha domain is found at 33–354 (RELKLLLLGT…QLNLREFNLV (322 aa)). The interval 36–49 (KLLLLGTGESGKST) is G1 motif. GTP-binding positions include 41–48 (GTGESGKS), 175–181 (LRVRVPT), 200–204 (DVGGQ), 269–272 (NKKD), and Ala-326. Positions 48 and 181 each coordinate Mg(2+). Residues 173 to 181 (DVLRVRVPT) are G2 motif. The G3 motif stretch occupies residues 196 to 205 (FRMVDVGGQR). The segment at 265–272 (ILFLNKKD) is G4 motif. Residues 324–329 (TCATDT) are G5 motif.

This sequence belongs to the G-alpha family. G(q) subfamily. In terms of assembly, g proteins are composed of 3 units; alpha, beta and gamma. The alpha chain contains the guanine nucleotide binding site.

Functionally, guanine nucleotide-binding proteins (G proteins) are involved as modulators or transducers in various transmembrane signaling systems. Acts as an activator of phospholipase C. Mediates responses to trypsin. This Xenopus laevis (African clawed frog) protein is Guanine nucleotide-binding protein subunit alpha-14 (gna14).